Here is a 55-residue protein sequence, read N- to C-terminus: Large ribosomal subunit protein bL33 (55 aa).

The protein belongs to the bacterial ribosomal protein bL33 family.

This is Large ribosomal subunit protein bL33 from Methylorubrum extorquens (strain CM4 / NCIMB 13688) (Methylobacterium extorquens).